A 344-amino-acid chain; its full sequence is Meiotic recombination protein DMC1 homolog (344 aa).

The interval 1 to 22 (MMASLKAEETSQMQLVEREEND) is disordered. 133–140 (GEFRSGKT) contributes to the ATP binding site. Arginine 235 serves as a coordination point for dsDNA. Residues arginine 235, phenylalanine 238, arginine 241, arginine 247, and arginine 315 each coordinate ssDNA. Residues arginine 241 and arginine 247 each contribute to the dsDNA site.

Belongs to the RecA family. DMC1 subfamily. In terms of assembly, double stacked ring-shaped homooctamer. Interacts with BRCA2A and BRCA2B. In terms of tissue distribution, expressed in mitotic and/or meiotic tissues. Expressed in roots, leaves and anthers and carpels of young fower buds.

It localises to the nucleus. Its function is as follows. May participate in meiotic recombination, specifically in homologous strand assimilation, which is required for the resolution of meiotic double-strand breaks. Mediates interhomolog recombination during meiosis. The protein is Meiotic recombination protein DMC1 homolog of Arabidopsis thaliana (Mouse-ear cress).